The primary structure comprises 793 residues: WASP homolog-associated protein with actin, membranes and microtubules (793 aa).

The interval 1 to 253 (MDSEQPDSLD…EVATSCKLGI (253 aa)) is mediates association with membranes. Residues 254 to 623 (LKSLDEDELG…FVPVSDQTLS (370 aa)) form a mediates interaction with microtubules region. Coiled-coil stretches lie at residues 265–290 (RRVAALQKEASEWTRQAEEAVGSIQD) and 445–503 (LGDN…LHQH). 2 disordered regions span residues 556 to 661 (SMVS…SFQG) and 675 to 699 (EDRPLPLACDPSAGRPCDYQGPGSM). Residues 566 to 579 (SQKRLSTAHHHKTA) are compositionally biased toward basic residues. The segment covering 618–628 (SDQTLSGSSED) has biased composition (polar residues). The mediates actin nucleation stretch occupies residues 624–793 (GSSEDLSLPP…DEPSPTEWDR (170 aa)). Residues 632–654 (PPQPPAPPLPPPPPPPPPPPLPP) are compositionally biased toward pro residues. WH2 domains follow at residues 698–716 (SMDEVLASLRQGKASLRKV) and 728–745 (VNEQVLAAIRQGVQLKKV). Residues 755 to 785 (KKSTSDLERSIREALERIKKVSADSEEDNDE) are a coiled coil. Positions 772–793 (IKKVSADSEEDNDEPSPTEWDR) are disordered. A compositionally biased stretch (acidic residues) spans 778–787 (DSEEDNDEPS). Phosphoserine is present on Ser-779.

In terms of assembly, interacts with ACTR3; indicative for an association with the ARP2/3 complex. Associates with microtubules; in vitro binds to tubulin heterodimer in a 1:1 stoichiometry; decorates microtubules with a repeat of 80 A along protofilaments. Interacts with RHOD (in GTP-bound form).

It is found in the cytoplasm. It localises to the endoplasmic reticulum-Golgi intermediate compartment. The protein resides in the cytoplasmic vesicle membrane. Its subcellular location is the golgi apparatus. The protein localises to the cis-Golgi network. Acts as a nucleation-promoting factor (NPF) that stimulates Arp2/3-mediated actin polymerization both at the Golgi apparatus and along tubular membranes. Involved as a regulator of Golgi positioning and morphology. Its activity in membrane tubulation requires F-actin and interaction with microtubules. Proposed to use coordinated actin-nucleating and microtubule-binding activities of distinct WHAMM molecules to drive membrane tubule elongation; when MT-bound can recruit and remodel membrane vesicles but is prevented to activate the Arp2/3 complex. Required for RhoD-dependent actin reorganization such as in cell adhesion and cell migration. Participates in vesicle transport between the endoplasmic reticulum and the Golgi complex. The polypeptide is WASP homolog-associated protein with actin, membranes and microtubules (Whamm) (Mus musculus (Mouse)).